Reading from the N-terminus, the 843-residue chain is Protein P (843 aa).

Residues 1-177 are terminal protein domain (TP); it reads MPLSYQHFRK…FCGSPYSWEQ (177 aa). A spacer region spans residues 178-346; sequence ELQHGRLFFK…YCLSHIVNLL (169 aa). A disordered region spans residues 248-272; it reads HPTTRQSFGVEPSGSGHIDNSASNS. The interval 347 to 690 is polymerase/reverse transcriptase domain (RT); that stretch reads EDWGPCTENG…YLNLYPVARQ (344 aa). Residues 357–600 enclose the Reverse transcriptase domain; that stretch reads EHNIRIPRTP…YSLNFMGYVI (244 aa). Residues D429, D551, and D552 each contribute to the Mg(2+) site.

This sequence belongs to the hepadnaviridae P protein family.

It catalyses the reaction DNA(n) + a 2'-deoxyribonucleoside 5'-triphosphate = DNA(n+1) + diphosphate. The catalysed reaction is Endonucleolytic cleavage to 5'-phosphomonoester.. Its activity is regulated as follows. Activated by host HSP70 and HSP40 in vitro to be able to bind the epsilon loop of the pgRNA. Because deletion of the RNase H region renders the protein partly chaperone-independent, the chaperones may be needed indirectly to relieve occlusion of the RNA-binding site by this domain. Inhibited by several reverse-transcriptase inhibitors: Lamivudine, Adefovir and Entecavir. Functionally, multifunctional enzyme that converts the viral RNA genome into dsDNA in viral cytoplasmic capsids. This enzyme displays a DNA polymerase activity that can copy either DNA or RNA templates, and a ribonuclease H (RNase H) activity that cleaves the RNA strand of RNA-DNA heteroduplexes in a partially processive 3'- to 5'-endonucleasic mode. Neo-synthesized pregenomic RNA (pgRNA) are encapsidated together with the P protein, and reverse-transcribed inside the nucleocapsid. Initiation of reverse-transcription occurs first by binding the epsilon loop on the pgRNA genome, and is initiated by protein priming, thereby the 5'-end of (-)DNA is covalently linked to P protein. Partial (+)DNA is synthesized from the (-)DNA template and generates the relaxed circular DNA (RC-DNA) genome. After budding and infection, the RC-DNA migrates in the nucleus, and is converted into a plasmid-like covalently closed circular DNA (cccDNA). The activity of P protein does not seem to be necessary for cccDNA generation, and is presumably released from (+)DNA by host nuclear DNA repair machinery. This Homo sapiens (Human) protein is Protein P.